The sequence spans 1495 residues: Terminal uridylyltransferase 7 (1495 aa).

4 disordered regions span residues 1 to 30 (MGDT…GHPQ), 43 to 69 (HGSK…RKGP), 89 to 140 (WMND…EDGY), and 162 to 205 (LETT…PVID). Over residues 15 to 26 (DRGTMDDDDFRR) the composition is skewed to basic and acidic residues. A phosphothreonine mark is found at threonine 57 and threonine 64. 2 stretches are compositionally biased toward basic and acidic residues: residues 92 to 118 (DSHK…EFKP) and 128 to 140 (QRKD…EDGY). Phosphoserine occurs at positions 132 and 172. Residues 178-187 (QRSRPRKPRK) are compositionally biased toward basic residues. Residues 244 to 274 (YTCRLCDVLIESIAFAHKHIKEKRHKKNIKE) form a Matrin-type zinc finger. The region spanning 551–600 (VGQLWVELLRFYALEFNLADLVISIRVKELVSRELKDWPKKRIAIEDPYS) is the PAP-associated 1 domain. The residue at position 600 (serine 600) is a Phosphoserine. Positions 734-756 (DDYKGDKVYHPETGRKNEKEKVG) are enriched in basic and acidic residues. Disordered regions lie at residues 734–757 (DDYK…KVGR) and 831–898 (THSV…EDDE). Positions 831-841 (THSVQGQTSEM) are enriched in polar residues. 3 stretches are compositionally biased toward acidic residues: residues 843–859 (PSDE…EEEE), 868–880 (EDED…DELD), and 887–898 (GDEDALSEEDDE). Serine 844 is subject to Phosphoserine. 2 positions are modified to phosphoserine: serine 893 and serine 939. Positions 951-1495 (SKLIFTKGKS…ASAKRTQQES (545 aa)) are sufficient for monouridylation activity. The CCHC-type 1 zinc-finger motif lies at 963-980 (VVCSLCKREGHLKKDCPE). Residues 1047–1050 (SSKN), 1057–1060 (SDLD), asparagine 1130, lysine 1152, 1170–1174 (SYAYT), and histidine 1286 each bind UTP. Mg(2+) is bound by residues aspartate 1058 and aspartate 1060. The PAP-associated 2 domain occupies 1233 to 1286 (SVGQLWLGLLRFYTEEFDFKEHVISIRRKSLLTTFKKQWTSKYIVIEDPFDLNH). The CCHC-type 2 zinc finger occupies 1345–1362 (RCCRICGKIGHFMKDCPM). 2 disordered regions span residues 1367–1424 (RRRR…MRAA) and 1466–1495 (CPQF…QQES). The segment covering 1381–1410 (PENKEKRSKEDKEIHNKYTEREVSTKEDKP) has biased composition (basic and acidic residues). Residues 1451 to 1468 (KRCFICGREGHIKKECPQ) form a CCHC-type 3 zinc finger. Residues 1470 to 1485 (KGSSGSLSSKYMTQGK) are compositionally biased toward polar residues.

The protein belongs to the DNA polymerase type-B-like family. Interacts with MOV10; the interaction is RNA-dependent. Requires Mg(2+) as cofactor. The cofactor is Mn(2+).

It is found in the cytoplasm. It catalyses the reaction RNA(n) + UTP = RNA(n)-3'-uridine ribonucleotide + diphosphate. Its function is as follows. Uridylyltransferase that mediates the terminal uridylation of mRNAs with short (less than 25 nucleotides) poly(A) tails, hence facilitating global mRNA decay. Essential for both oocyte maturation and fertility. Through 3' terminal uridylation of mRNA, sculpts, with TUT7, the maternal transcriptome by eliminating transcripts during oocyte growth. Involved in microRNA (miRNA)-induced gene silencing through uridylation of deadenylated miRNA targets. Also functions as an integral regulator of microRNA biogenesiS using 3 different uridylation mechanisms. Acts as a suppressor of miRNA biogenesis by mediating the terminal uridylation of some miRNA precursors, including that of let-7 (pre-let-7). Uridylated pre-let-7 RNA is not processed by Dicer and undergo degradation. Pre-let-7 uridylation is strongly enhanced in the presence of LIN28A. In the absence of LIN28A, TUT7 and TUT4 monouridylate group II pre-miRNAs, which includes most of pre-let7 members, that shapes an optimal 3' end overhang for efficient processing. Add oligo-U tails to truncated pre-miRNAS with a 5' overhang which may promote rapid degradation of non-functional pre-miRNA species. Does not play a role in replication-dependent histone mRNA degradation. Due to functional redundancy between TUT4 and TUT7, the identification of the specific role of each of these proteins is difficult. TUT4 and TUT7 restrict retrotransposition of long interspersed element-1 (LINE-1) in cooperation with MOV10 counteracting the RNA chaperonne activity of L1RE1. TUT7 uridylates LINE-1 mRNAs in the cytoplasm which inhibits initiation of reverse transcription once in the nucleus, whereas uridylation by TUT4 destabilizes mRNAs in cytoplasmic ribonucleoprotein granules. The polypeptide is Terminal uridylyltransferase 7 (Homo sapiens (Human)).